The primary structure comprises 613 residues: Serine protease FAM111A (613 aa).

A disordered region spans residues 1–72 (MSCKKRKSQI…TRQDQTPPLN (72 aa)). Residue Lys-19 forms a Glycyl lysine isopeptide (Lys-Gly) (interchain with G-Cter in SUMO2) linkage. Ser-25 carries the phosphoserine modification. Lys-29 participates in a covalent cross-link: Glycyl lysine isopeptide (Lys-Gly) (interchain with G-Cter in SUMO2). Residues 40 to 56 (VDSKKMPRDITNTRDQR) are compositionally biased toward basic and acidic residues. Lys-62 participates in a covalent cross-link: Glycyl lysine isopeptide (Lys-Gly) (interchain with G-Cter in SUMO2). Catalysis depends on charge relay system residues His-383, Asp-437, and Ser-543.

It belongs to the FAM111 family. In terms of assembly, interacts (via PIP-box) with PCNA; this interaction is direct. In terms of processing, autocatalytically cleaved; autocatalytic cleavage takes place in trans.

It localises to the nucleus. It is found in the chromosome. Its subcellular location is the cytoplasm. Functionally, single-stranded DNA-binding serine protease that mediates the proteolytic cleavage of covalent DNA-protein cross-links (DPCs) during DNA synthesis, thereby playing a key role in maintaining genomic integrity. DPCs are highly toxic DNA lesions that interfere with essential chromatin transactions, such as replication and transcription, and which are induced by reactive agents, such as UV light or formaldehyde. Protects replication fork from stalling by removing DPCs, such as covalently trapped topoisomerase 1 (TOP1) adducts on DNA lesion, or poly(ADP-ribose) polymerase 1 (PARP1)-DNA complexes trapped by PARP inhibitors. Required for PCNA loading on replication sites. Promotes S-phase entry and DNA synthesis. The polypeptide is Serine protease FAM111A (Mus musculus (Mouse)).